Here is a 77-residue protein sequence, read N- to C-terminus: Large ribosomal subunit protein uL24c (77 aa).

This sequence belongs to the universal ribosomal protein uL24 family. Part of the 50S ribosomal subunit.

It localises to the plastid. The protein localises to the chloroplast. Its function is as follows. One of two assembly initiator proteins, it binds directly to the 5'-end of the 23S rRNA, where it nucleates assembly of the 50S subunit. This chain is Large ribosomal subunit protein uL24c (rpl24), found in Thalassiosira pseudonana (Marine diatom).